The following is a 516-amino-acid chain: BAR/IMD domain-containing adapter protein 2-like 1 (516 aa).

The IMD domain occupies 1–249 (MSRGPEEVNR…MNMIEEIKTP (249 aa)). A coiled-coil region spans residues 115-148 (MNATLKRYQAEHRNKLDSLEKSQAELKKIRRKSQ). 2 positions are modified to phosphothreonine: Thr-248 and Thr-257. Ser-261 and Ser-281 each carry phosphoserine. Positions 303–328 (NPATAGQSAEKTNNSTANTGDDPSLQ) are disordered. At Ser-332 the chain carries Phosphoserine. The SH3 domain maps to 340 to 403 (MKKQKVKTIF…PSSYTKLLEE (64 aa)). Residue Thr-413 is modified to Phosphothreonine. A phosphoserine mark is found at Ser-415, Ser-421, and Ser-423. Positions 454–516 (ADAAKIPSTS…TNDRSAPIIR (63 aa)) are disordered. The span at 474–485 (ATSTSPSDSNGT) shows a compositional bias: polar residues. A binds F-actin region spans residues 488-516 (PPFLSGENPFATVKLRPTVTNDRSAPIIR).

In terms of assembly, interacts with RAC1. Binds to F-actin. Interacts with FASLG. Phosphorylated on tyrosine in response to insulin.

It is found in the cytoplasm. It localises to the cytoskeleton. Its function is as follows. May function as adapter protein. Involved in the formation of clusters of actin bundles. Plays a role in the reorganization of the actin cytoskeleton in response to bacterial infection. This chain is BAR/IMD domain-containing adapter protein 2-like 1 (Baiap2l1), found in Rattus norvegicus (Rat).